A 1234-amino-acid polypeptide reads, in one-letter code: Formin-like protein 3 (1234 aa).

One can recognise a Phosphatase tensin-type domain in the interval 1-208; it reads MRLDSFPASI…QYVARRNISP (208 aa). The Phosphocysteine intermediate role is filled by Cys-141. A C2 tensin-type domain is found at 214-352; the sequence is ERALSFDCLI…FRAEMLFCEL (139 aa). 2 disordered regions span residues 443–478 and 492–840; these read DSDEEKYSVASDSVSSSEHEKVQPGGNSSDSENINH and LVNT…LKPL. Positions 498-507 are enriched in pro residues; the sequence is VLPPTTPPPC. A compositionally biased stretch (basic and acidic residues) spans 524-534; that stretch reads VQHESPSDRKL. Composition is skewed to pro residues over residues 536-576, 584-656, 663-673, 688-699, 709-721, 729-739, and 762-784; these read SPSP…PPLP, QPPP…PPAP, PAPPPPPPPPR, GPPPPPPPPLPP, PSAPPPPPPPPPA, APAPPLPPPLP, and PAPPPPPPQAPKPPGTVPPPPPL. The region spanning 827-1226 is the FH2 domain; it reads QQSNPPKKAS…KLEKDKEKAT (400 aa).

Belongs to the formin-like family. Class-II subfamily.

This is Formin-like protein 3 (FH3) from Oryza sativa subsp. japonica (Rice).